The chain runs to 506 residues: Cysteine--tRNA ligase (506 aa).

Cysteine 34 serves as a coordination point for Zn(2+). Residues proline 36–asparagine 46 carry the 'HIGH' region motif. Positions 230, 269, and 273 each coordinate Zn(2+). The 'KMSKS' region signature appears at lysine 302 to serine 306. An ATP-binding site is contributed by lysine 305.

Belongs to the class-I aminoacyl-tRNA synthetase family. Monomer. The cofactor is Zn(2+).

The protein resides in the cytoplasm. The enzyme catalyses tRNA(Cys) + L-cysteine + ATP = L-cysteinyl-tRNA(Cys) + AMP + diphosphate. This is Cysteine--tRNA ligase from Brucella abortus (strain S19).